Here is a 123-residue protein sequence, read N- to C-terminus: MAAAKPGELMGICSSYQAVMPHFVCLADEFPQPVRPAKLSKGKGRLRRPRQSRFKTQPVTFDEIQEVEEEGVSPMEEEKAKKSFLQSLECLRRSTQSLSLQREQLSSCKLRNSLDSSDSDSAL.

A Phosphothreonine modification is found at T56. S73, S87, S97, S113, and S119 each carry phosphoserine.

In terms of tissue distribution, highly expressed in the kidney (at protein level).

It is found in the cytoplasm. This is an uncharacterized protein from Felis catus (Cat).